Consider the following 980-residue polypeptide: LRR receptor-like serine/threonine-protein kinase SIK1 (980 aa).

An N-terminal signal peptide occupies residues 1-24 (MAAARAPWLWWWVVVVVGVAVAEA). At 25 to 588 (ASGGGGGGDG…HGQRVNISKT (564 aa)) the chain is on the extracellular side. Residues N72 and N81 are each glycosylated (N-linked (GlcNAc...) asparagine). LRR repeat units lie at residues 75–98 (FAVL…IGEL), 99–122 (KNLQ…IGDC), 124–146 (SLKY…ISKL), 147–170 (KQLE…LSQI), 171–194 (PNLK…IYWN), 196–218 (VLQY…MCQL), 219–242 (TGLW…IGNC), 243–265 (TSFE…NIGF), 266–289 (LQVA…IGLM), 290–312 (QALA…ILGN), 314–337 (SYTG…LGNM), 338–361 (SKLS…LGKL), 362–385 (EELF…ISSC), 387–408 (ALNK…GFQK), 409–433 (LESL…LGHI), 435–457 (NLDT…IGDL), 458–480 (EHLL…EFGN), 481–505 (LRSV…LGQL), 507–529 (NLDS…LANC), and 531–554 (SLNN…NFSK). N230 and N241 each carry an N-linked (GlcNAc...) asparagine glycan. Residues N312 and N336 are each glycosylated (N-linked (GlcNAc...) asparagine). Residues N381, N399, and N416 are each glycosylated (N-linked (GlcNAc...) asparagine). 2 N-linked (GlcNAc...) asparagine glycosylation sites follow: N464 and N493. N-linked (GlcNAc...) asparagine glycosylation is found at N536, N541, N551, and N584. Residues 589–609 (AIACIILGFIILLCVLLLAIY) form a helical membrane-spanning segment. Over 610 to 980 (KTNQPQPLVK…FGEVISKHTM (371 aa)) the chain is Cytoplasmic. The 271-residue stretch at 653-923 (LSEKYIIGYG…EVARVLLSLL (271 aa)) folds into the Protein kinase domain. ATP contacts are provided by residues 659–667 (IGYGASSTV) and K681. D778 serves as the catalytic Proton acceptor.

Belongs to the protein kinase superfamily. Ser/Thr protein kinase family. Post-translationally, autophosphorylated. As to expression, expressed in nodes, vascular bundles of stems, and anthers.

The protein resides in the cell membrane. It carries out the reaction L-seryl-[protein] + ATP = O-phospho-L-seryl-[protein] + ADP + H(+). It catalyses the reaction L-threonyl-[protein] + ATP = O-phospho-L-threonyl-[protein] + ADP + H(+). Receptor kinase involved in salt drought stress responses. Acts as a positive regulator of salt and drought tolerance. May promote salt and drought tolerance through the induction of the activities of antioxidative enzymes, such as peroxidase, superoxide dismutase and catalase. May be involved in the control of stomatal development in leaf epidermis. Possesses kinase activity in vitro. Does not seem to be involved in heat tolerance. This Oryza sativa subsp. japonica (Rice) protein is LRR receptor-like serine/threonine-protein kinase SIK1.